Here is a 558-residue protein sequence, read N- to C-terminus: Trehalase 1 (558 aa).

Belongs to the glycosyl hydrolase 15 family.

It catalyses the reaction alpha,alpha-trehalose + H2O = alpha-D-glucose + beta-D-glucose. The protein operates within glycan degradation; trehalose degradation; D-glucose from alpha,alpha-trehalose: step 1/1. Catalyzes the hydrolysis of alpha,alpha-trehalose into two molecules of D-glucose. In Sulfolobus acidocaldarius (strain ATCC 33909 / DSM 639 / JCM 8929 / NBRC 15157 / NCIMB 11770), this protein is Trehalase 1 (treH1).